Reading from the N-terminus, the 149-residue chain is Calmodulin (149 aa).

Alanine 2 carries the post-translational modification N-acetylalanine. 4 consecutive EF-hand domains span residues glutamate 8–asparagine 43, proline 44–glutamate 79, aspartate 81–lysine 116, and leucine 117–lysine 149. Aspartate 21, aspartate 23, aspartate 25, threonine 27, glutamate 32, aspartate 57, aspartate 59, asparagine 61, threonine 63, glutamate 68, aspartate 94, aspartate 96, asparagine 98, and glutamate 105 together coordinate Ca(2+). Lysine 116 is modified (N6,N6,N6-trimethyllysine). Ca(2+) is bound by residues aspartate 130, aspartate 132, aspartate 134, glutamine 136, and glutamate 141.

Belongs to the calmodulin family.

Calmodulin mediates the control of a large number of enzymes, ion channels and other proteins by Ca(2+). Among the enzymes to be stimulated by the calmodulin-Ca(2+) complex are a number of protein kinases and phosphatases. In Suberites domuncula (Sponge), this protein is Calmodulin.